The primary structure comprises 208 residues: Small ribosomal subunit protein uS4 (208 aa).

The S4 RNA-binding domain maps to serine 96–leucine 159.

The protein belongs to the universal ribosomal protein uS4 family. In terms of assembly, part of the 30S ribosomal subunit. Contacts protein S5. The interaction surface between S4 and S5 is involved in control of translational fidelity.

In terms of biological role, one of the primary rRNA binding proteins, it binds directly to 16S rRNA where it nucleates assembly of the body of the 30S subunit. With S5 and S12 plays an important role in translational accuracy. The chain is Small ribosomal subunit protein uS4 from Mycoplasma capricolum subsp. capricolum (strain California kid / ATCC 27343 / NCTC 10154).